The sequence spans 157 residues: Transcriptional repressor NrdR (157 aa).

A zinc finger lies at 3 to 34; the sequence is CPFCGFADTRVIDSRLGKEGNNIRRRRECSQC. Residues 49–139 enclose the ATP-cone domain; sequence PLIIKKDARR…VYRQFKDINE (91 aa).

This sequence belongs to the NrdR family. The cofactor is Zn(2+).

Negatively regulates transcription of bacterial ribonucleotide reductase nrd genes and operons by binding to NrdR-boxes. The sequence is that of Transcriptional repressor NrdR from Syntrophotalea carbinolica (strain DSM 2380 / NBRC 103641 / GraBd1) (Pelobacter carbinolicus).